A 120-amino-acid polypeptide reads, in one-letter code: Non-specific lipid-transfer protein 2 (120 aa).

The first 25 residues, 1-25, serve as a signal peptide directing secretion; it reads MATSMKLACVALVMCMVVIAPMAEA. Cystine bridges form between Cys29–Cys78, Cys39–Cys55, Cys56–Cys101, and Cys76–Cys115.

It belongs to the plant LTP family. In terms of tissue distribution, expressed in roots, stem, leaves and tendrils of the mature plant.

In terms of biological role, plant non-specific lipid-transfer proteins transfer phospholipids as well as galactolipids across membranes. May play a role in wax or cutin deposition in the cell walls of expanding epidermal cells and certain secretory tissues. The polypeptide is Non-specific lipid-transfer protein 2 (Pisum sativum (Garden pea)).